A 256-amino-acid polypeptide reads, in one-letter code: 5-keto-4-deoxy-D-glucarate aldolase (256 aa).

His50 (proton acceptor) is an active-site residue. A substrate-binding site is contributed by Gln151. Glu153 lines the Mg(2+) pocket. Substrate is bound by residues Ser178 and Asp179. Mg(2+) is bound at residue Asp179.

Belongs to the HpcH/HpaI aldolase family. KDGluc aldolase subfamily. In terms of assembly, homohexamer; trimer of dimers. The cofactor is Mg(2+).

It carries out the reaction 5-dehydro-4-deoxy-D-glucarate = 2-hydroxy-3-oxopropanoate + pyruvate. The enzyme catalyses 2-dehydro-3-deoxy-D-glucarate = 2-hydroxy-3-oxopropanoate + pyruvate. It functions in the pathway carbohydrate acid metabolism; galactarate degradation; D-glycerate from galactarate: step 2/3. In terms of biological role, catalyzes the reversible retro-aldol cleavage of both 5-keto-4-deoxy-D-glucarate and 2-keto-3-deoxy-D-glucarate to pyruvate and tartronic semialdehyde. This chain is 5-keto-4-deoxy-D-glucarate aldolase, found in Escherichia coli (strain ATCC 8739 / DSM 1576 / NBRC 3972 / NCIMB 8545 / WDCM 00012 / Crooks).